Here is a 339-residue protein sequence, read N- to C-terminus: DNA-directed RNA polymerase subunit alpha (339 aa).

The interval 1 to 233 (MVREEVAGST…DLFLPFLHAE (233 aa)) is alpha N-terminal domain (alpha-NTD). The tract at residues 264–339 (KKGIPLNCIF…IDLLKNKLSF (76 aa)) is alpha C-terminal domain (alpha-CTD).

This sequence belongs to the RNA polymerase alpha chain family. In plastids the minimal PEP RNA polymerase catalytic core is composed of four subunits: alpha, beta, beta', and beta''. When a (nuclear-encoded) sigma factor is associated with the core the holoenzyme is formed, which can initiate transcription.

The protein resides in the plastid. Its subcellular location is the chloroplast. It carries out the reaction RNA(n) + a ribonucleoside 5'-triphosphate = RNA(n+1) + diphosphate. In terms of biological role, DNA-dependent RNA polymerase catalyzes the transcription of DNA into RNA using the four ribonucleoside triphosphates as substrates. In Elymus californicus (California bottlebrush grass), this protein is DNA-directed RNA polymerase subunit alpha.